Consider the following 306-residue polypeptide: Protein FdhE homolog (306 aa).

It belongs to the FdhE family.

Its subcellular location is the cytoplasm. Necessary for formate dehydrogenase activity. In Proteus mirabilis (strain HI4320), this protein is Protein FdhE homolog.